The chain runs to 2850 residues: Mucin-6 (2850 aa).

The first 22 residues, Met-1–Ala-22, serve as a signal peptide directing secretion. The region spanning Gly-43–Ala-256 is the VWFD 1 domain. Cystine bridges form between Cys-45–Cys-218 and Cys-67–Cys-255. A glycan (N-linked (GlcNAc...) asparagine) is linked at Asn-94. Positions His-160–Ser-183 are disordered. Asn-310 carries an N-linked (GlcNAc...) asparagine glycan. Residues Cys-344 to Cys-399 enclose the TIL 1 domain. The region spanning Gly-437–Ser-621 is the VWFD 2 domain. 2 disulfide bridges follow: Cys-439–Cys-575 and Cys-461–Cys-620. N-linked (GlcNAc...) asparagine glycosylation is found at Asn-528 and Asn-701. One can recognise a TIL 2 domain in the interval Cys-806–Cys-869. Positions Ser-908–Gly-1080 constitute a VWFD 3 domain. Disulfide bonds link Cys-910/Cys-1044, Cys-932/Cys-1079, Cys-941/Cys-1041, and Cys-959/Cys-966. N-linked (GlcNAc...) asparagine glycosylation is found at Asn-1017 and Asn-1221. Positions Glu-1263–Gly-1281 are enriched in low complexity. 16 disordered regions span residues Glu-1263 to Leu-1363, Gly-1377 to Val-1400, Val-1466 to Thr-1504, Thr-1580 to His-1600, Ile-1626 to Val-1650, Thr-1705 to Thr-1813, Gln-1877 to His-1942, Ile-1968 to Val-1992, Thr-2049 to Thr-2119, Gln-2219 to Ser-2254, Ile-2276 to Thr-2295, Glu-2306 to Asp-2338, Thr-2370 to Pro-2473, Pro-2511 to Ser-2621, Pro-2634 to Thr-2674, and Ser-2692 to Ser-2761. Polar residues predominate over residues Glu-1294–Tyr-1312. A compositionally biased stretch (low complexity) spans Thr-1345–Leu-1363. Composition is skewed to polar residues over residues Met-1378–Arg-1399 and Val-1466–His-1484. 8 repeat units span residues Thr-1440 to Glu-1555, Gly-1556 to Asp-1712, Arg-1713 to Asp-1885, Arg-1886 to Asp-2054, Arg-2055 to Asp-2227, Arg-2228 to Glu-2396, Arg-2397 to Thr-2563, and Arg-2564 to Lys-2671. Residues Thr-1440 to Lys-2671 are approximate repeats. The segment covering Thr-1485–Thr-1504 has biased composition (low complexity). A compositionally biased stretch (polar residues) spans Ile-1626–Ala-1639. Over residues Thr-1705–Ser-1719 the composition is skewed to low complexity. Over residues Ala-1720–His-1757 the composition is skewed to polar residues. Low complexity predominate over residues Thr-1758 to Thr-1777. The span at Val-1778–Thr-1813 shows a compositional bias: polar residues. The segment covering Ser-1893–His-1942 has biased composition (low complexity). The segment covering Ile-1968 to Ala-1981 has biased composition (polar residues). Residues Thr-2049–Ser-2061 are compositionally biased toward low complexity. A compositionally biased stretch (polar residues) spans Ala-2062–His-2099. Positions Thr-2100–Thr-2119 are enriched in low complexity. The span at Asp-2227–Ser-2238 shows a compositional bias: polar residues. Residues Thr-2282–Thr-2295 are compositionally biased toward low complexity. Residues Thr-2370–Ser-2384 show a composition bias toward low complexity. Over residues Ala-2385–Val-2429 the composition is skewed to polar residues. Residues His-2436–Thr-2456 show a composition bias toward low complexity. Polar residues predominate over residues Ala-2457–Ser-2466. The segment covering Ser-2516–Thr-2533 has biased composition (low complexity). Over residues Ile-2534–Phe-2560 the composition is skewed to polar residues. Positions Pro-2561 to Ser-2584 are enriched in low complexity. The segment covering Arg-2585–His-2601 has biased composition (polar residues). Low complexity predominate over residues Thr-2639–Thr-2674. The segment covering Ser-2692–Leu-2725 has biased composition (polar residues). Low complexity predominate over residues Ser-2726–Thr-2759. Disulfide bonds link Cys-2760–Cys-2807, Cys-2774–Cys-2821, Cys-2783–Cys-2841, and Cys-2787–Cys-2843. The 90-residue stretch at Cys-2760–Lys-2849 folds into the CTCK domain.

In terms of assembly, multimer; disulfide-linked. O-glycosylated. In terms of tissue distribution, expressed in stomach, duodenum and small intestine.

It localises to the secreted. Functionally, may provide a mechanism for modulation of the composition of the protective mucus layer related to acid secretion or the presence of bacteria and noxious agents in the lumen. Plays an important role in the cytoprotection of epithelial surfaces and are used as tumor markers in a variety of cancers. May play a role in epithelial organogenesis. The polypeptide is Mucin-6 (Muc6) (Mus musculus (Mouse)).